The sequence spans 602 residues: Elongation factor 4 (602 aa).

The region spanning 8–189 (KNIRNFSIIA…KIITTIPAPS (182 aa)) is the tr-type G domain. GTP-binding positions include 20–25 (DHGKST) and 136–139 (NKID).

This sequence belongs to the TRAFAC class translation factor GTPase superfamily. Classic translation factor GTPase family. LepA subfamily.

It localises to the cell inner membrane. The catalysed reaction is GTP + H2O = GDP + phosphate + H(+). Its function is as follows. Required for accurate and efficient protein synthesis under certain stress conditions. May act as a fidelity factor of the translation reaction, by catalyzing a one-codon backward translocation of tRNAs on improperly translocated ribosomes. Back-translocation proceeds from a post-translocation (POST) complex to a pre-translocation (PRE) complex, thus giving elongation factor G a second chance to translocate the tRNAs correctly. Binds to ribosomes in a GTP-dependent manner. This chain is Elongation factor 4, found in Helicobacter pylori (strain G27).